The chain runs to 292 residues: 4-hydroxy-tetrahydrodipicolinate synthase (292 aa).

Threonine 45 contributes to the pyruvate binding site. The active-site Proton donor/acceptor is tyrosine 133. Residue lysine 161 is the Schiff-base intermediate with substrate of the active site. Residue isoleucine 203 coordinates pyruvate.

Belongs to the DapA family. Homodimer.

It localises to the cytoplasm. The enzyme catalyses L-aspartate 4-semialdehyde + pyruvate = (2S,4S)-4-hydroxy-2,3,4,5-tetrahydrodipicolinate + H2O + H(+). It functions in the pathway amino-acid biosynthesis; L-lysine biosynthesis via DAP pathway; (S)-tetrahydrodipicolinate from L-aspartate: step 3/4. Catalyzes the condensation of (S)-aspartate-beta-semialdehyde [(S)-ASA] and pyruvate to 4-hydroxy-tetrahydrodipicolinate (HTPA). This is 4-hydroxy-tetrahydrodipicolinate synthase from Stutzerimonas stutzeri (strain A1501) (Pseudomonas stutzeri).